Here is a 166-residue protein sequence, read N- to C-terminus: NAD(P)H-quinone oxidoreductase subunit I, chloroplastic (166 aa).

2 4Fe-4S ferredoxin-type domains span residues 55–84 and 95–124; these read GRIH…VDWK and LNYS…MTEE. 8 residues coordinate [4Fe-4S] cluster: cysteine 64, cysteine 67, cysteine 70, cysteine 74, cysteine 104, cysteine 107, cysteine 110, and cysteine 114.

It belongs to the complex I 23 kDa subunit family. In terms of assembly, NDH is composed of at least 16 different subunits, 5 of which are encoded in the nucleus. Requires [4Fe-4S] cluster as cofactor.

It is found in the plastid. The protein resides in the chloroplast thylakoid membrane. It carries out the reaction a plastoquinone + NADH + (n+1) H(+)(in) = a plastoquinol + NAD(+) + n H(+)(out). The catalysed reaction is a plastoquinone + NADPH + (n+1) H(+)(in) = a plastoquinol + NADP(+) + n H(+)(out). NDH shuttles electrons from NAD(P)H:plastoquinone, via FMN and iron-sulfur (Fe-S) centers, to quinones in the photosynthetic chain and possibly in a chloroplast respiratory chain. The immediate electron acceptor for the enzyme in this species is believed to be plastoquinone. Couples the redox reaction to proton translocation, and thus conserves the redox energy in a proton gradient. The protein is NAD(P)H-quinone oxidoreductase subunit I, chloroplastic of Silphium perfoliatum (Cup plant).